The chain runs to 591 residues: Aspartate--tRNA ligase (591 aa).

Glu173 serves as a coordination point for L-aspartate. The aspartate stretch occupies residues 197–200; the sequence is QLFK. Arg219 is a binding site for L-aspartate. Residues 219-221 and Gln228 each bind ATP; that span reads RDE. Residue His448 coordinates L-aspartate. Residue Glu482 participates in ATP binding. An L-aspartate-binding site is contributed by Arg489. 534–537 serves as a coordination point for ATP; the sequence is GLDR.

Belongs to the class-II aminoacyl-tRNA synthetase family. Type 1 subfamily. In terms of assembly, homodimer.

The protein localises to the cytoplasm. It catalyses the reaction tRNA(Asp) + L-aspartate + ATP = L-aspartyl-tRNA(Asp) + AMP + diphosphate. Functionally, catalyzes the attachment of L-aspartate to tRNA(Asp) in a two-step reaction: L-aspartate is first activated by ATP to form Asp-AMP and then transferred to the acceptor end of tRNA(Asp). This is Aspartate--tRNA ligase from Shewanella sp. (strain MR-7).